The primary structure comprises 193 residues: Outer membrane lipoprotein DolP (193 aa).

The first 21 residues, 1 to 21 (MTLSPLKKLAILLGATIFLQG), serve as a signal peptide directing secretion. C22 is lipidated: N-palmitoyl cysteine. C22 carries S-diacylglycerol cysteine lipidation. BON domains are found at residues 48–117 (DDET…TVSP) and 126–193 (KDSW…KYLD).

This sequence belongs to the lipoprotein DolP family.

The protein localises to the cell outer membrane. Its function is as follows. Plays an important role in maintaining outer membrane integrity. The chain is Outer membrane lipoprotein DolP from Haemophilus influenzae (strain ATCC 51907 / DSM 11121 / KW20 / Rd).